A 516-amino-acid polypeptide reads, in one-letter code: Rho guanine nucleotide exchange factor 9 (516 aa).

The 60-residue stretch at 8-67 (DSIVSAEAVWDHVTMANRELAFKAGDVIKVLDASNKDWWWGQIDDEEGWFPASFVRLWVN) folds into the SH3 domain. An interaction with GPHN region spans residues 100–110 (RDQMRANVINE). The DH domain occupies 103–287 (MRANVINEIM…RNVTQQINER (185 aa)). One can recognise a PH domain in the interval 318-425 (ELIYTGEMAW…WLRAFREERK (108 aa)). The tract at residues 453–480 (PKQKGVNSARSVPPSYPPPQDPLNHGQY) is disordered. The residue at position 502 (Ser502) is a Phosphoserine.

As to quaternary structure, interacts with GPHN. Detected in brain. Detected at low levels in heart.

It localises to the cytoplasm. It is found in the postsynaptic density. Functionally, acts as a guanine nucleotide exchange factor (GEF) for CDC42. Promotes formation of GPHN clusters. The protein is Rho guanine nucleotide exchange factor 9 (ARHGEF9) of Homo sapiens (Human).